Reading from the N-terminus, the 346-residue chain is Methylthioribose-1-phosphate isomerase (346 aa).

Residues 50–52 (RGA), R93, and Q196 each bind substrate. Residue D237 is the Proton donor of the active site. Residue 247–248 (NK) participates in substrate binding.

This sequence belongs to the eIF-2B alpha/beta/delta subunits family. MtnA subfamily.

It carries out the reaction 5-(methylsulfanyl)-alpha-D-ribose 1-phosphate = 5-(methylsulfanyl)-D-ribulose 1-phosphate. It participates in amino-acid biosynthesis; L-methionine biosynthesis via salvage pathway; L-methionine from S-methyl-5-thio-alpha-D-ribose 1-phosphate: step 1/6. In terms of biological role, catalyzes the interconversion of methylthioribose-1-phosphate (MTR-1-P) into methylthioribulose-1-phosphate (MTRu-1-P). This is Methylthioribose-1-phosphate isomerase from Alkalilimnicola ehrlichii (strain ATCC BAA-1101 / DSM 17681 / MLHE-1).